We begin with the raw amino-acid sequence, 545 residues long: Pentatricopeptide repeat-containing protein At4g18840 (545 aa).

PPR repeat units follow at residues 104–138 (NGFT…PVFP), 139–173 (DKYS…GLVT), 174–204 (DVFV…MPVR), 205–239 (DAVS…NVES), 240–266 (WNFM…MPVR), 267–301 (DVVS…STEK), 303–337 (DGFT…GIEI), 338–368 (EGFL…TSKR), 369–403 (DVST…GFKP), 404–434 (NGIT…MSSV), and 440–474 (TIEH…EASI). Residues 475–545 (LLESLLGACK…ERVNRSLDVA (71 aa)) form a type E motif region.

Belongs to the PPR family. PCMP-E subfamily.

This Arabidopsis thaliana (Mouse-ear cress) protein is Pentatricopeptide repeat-containing protein At4g18840 (PCMP-E101).